We begin with the raw amino-acid sequence, 1506 residues long: MAYSWQTEPNRTEPQEDGSDTQQFHHTNQHLSSRQVRLGFDQLVEEINNKTPLSESEKEEDTYFVPDAPNLGSKWPSIYETHPRYFSEFTSQSPDSSQLRFGKLSAIGFNPAVLPTHQLIHEGASWRNPSGKYHGIEYPRFDALPPSSTGQGECNPQGQSGTKHHNYCGEHEGNLPHHHSSYSIDSIPNREKRRSGDVNLVEPSLEFSKDSFLPRTSENVSVESTEPIGCPIEIVEVPQGSNKNLASFCNKVKKIRESYHASDINSNSGKIWAITTAYPSRLFADTKFRVKISIDNSAQLLLLMPHANYLVKDLIAEILLLCANEPLSPKEYLLSVCGSEEFLQMDHSLGSHKIFQKNKSVIQLHLQKNRDTPGKLSRKSEDDHSPFHLNQLLEFTHIWKISRQCLSTVMKKYNLHVEHLLKPQKDMEEKHLSSMVSGNQHTSQPHVNNVLEEVKNICSVLGCIETKQVSDAVKELNLILQRPSQNFHQNSETSKKGFIERVTAELSRSIYQLIDVYCSSFCTDFQPVHTPGGVSHVHAGLQSHLSFTVCSLHNVPETWAHSYKAFSFSCWLTYAGKKLCQVKSCRPLPVTKSFSLLVNWNEIINFPLEIKSLPRESMLVIKLFGIDSATHSTNLLAWTCLPLFPRQESVLGSRLFSVTLQSEPPIEMIAPGVWDGSQPSPLTLQIDFPDAGWEYLKPESEENRTDHEEPPRECLKHIAKLSQKKSPLLLSEEKRRYLWFYRLYCNNENSSLPLVLGSAPGWDEETVSEMHAILRRWTFSHPWEALGLLTSRFPDQDIREVAVQQLDTLLTDELLDCLPQLVQAVKFEWNLESPLVELLPRRPLQSIRVAHCLYWLLRDAQGEAYFKSWYQELLAALQFCAGEALNEELSKEQKLVKLLGDIGEKVKSASDPQRKDVLKKEIGSLEEFFKDIKTCHLPLNPALCIKGIDRDACSYFTSNASPLKITFINANPMGKNISVIFKAGDDLRQDMLALQIIQVMDNAWLQEGLDMQMITYGCLSTGRAQGFIEMVPDAVTLAKIHLHSGLIGPLKENTIKKWFSQHNHLKEDYEKALRNFFYSCAGWCVVTFILGVCDRHNDNIMLTKSGHMFHIDFGKFLGHAQTFGGIKRDRAPFIFTSEMEYFITEGGKNIQHFQDFVELCCRAYNIVRKHSQLILSLLEMMLHAGLPELRGIEDLKYVHNNLRPQDTDLEATSHFTKKIKESLECFPVKLNNLIHTLAQMPALSLAKPAPQTLLQESCILNKTRTIQRVTILGFSKTHSNLYLMEVTCSDNRRSLTKKSFEQFYRLHSQMQKQFSSLALPEFPHWWHLPFTDSDHKRIRDLSHYVEQVLRGSYEVANSDCVLSFFLSEHIQPTLEDSPFVDPGENSLDKSPKVQLLMTYEDSRLTILVKHLKNIHLPDGSVPSAHVEIYLLPHPSEVRRKKTKCVPKCTDPTYNEIVVYDEVLGLQGHVLMLIVKSKTVFVGAVNIQLCSVPLNEEKWYPLGNSII.

The disordered stretch occupies residues 1–34 (MAYSWQTEPNRTEPQEDGSDTQQFHHTNQHLSSR). Positions 20–34 (DTQQFHHTNQHLSSR) are enriched in polar residues. Residues 285-371 (DTKFRVKISI…IQLHLQKNRD (87 aa)) form the PI3K-RBD domain. The C2 PI3K-type domain occupies 541-689 (LQSHLSFTVC…SPLTLQIDFP (149 aa)). One can recognise a PIK helical domain in the interval 704–880 (RTDHEEPPRE…QELLAALQFC (177 aa)). A PI3K/PI4K catalytic domain is found at 949 to 1227 (DRDACSYFTS…KIKESLECFP (279 aa)). The G-loop stretch occupies residues 955–961 (YFTSNAS). The segment at 1091–1099 (GVCDRHNDN) is catalytic loop. An activation loop region spans residues 1110-1136 (HIDFGKFLGHAQTFGGIKRDRAPFIFT). The PX domain occupies 1260–1372 (LNKTRTIQRV…SFFLSEHIQP (113 aa)). A C2 domain is found at 1381 to 1506 (DPGENSLDKS…KWYPLGNSII (126 aa)).

This sequence belongs to the PI3/PI4-kinase family. Expressed predominantly in liver. Also found in kidney, lung and lymphoid tissue. Down-regulated in BeF3 cells expressing the BCR-ABL oncogene p185.

The protein localises to the membrane. It carries out the reaction a 1,2-diacyl-sn-glycero-3-phospho-(1D-myo-inositol 4-phosphate) + ATP = a 1,2-diacyl-sn-glycero-3-phospho-(1D-myo-inositol-3,4-bisphosphate) + ADP + H(+). It catalyses the reaction a 1,2-diacyl-sn-glycero-3-phospho-(1D-myo-inositol) + ATP = a 1,2-diacyl-sn-glycero-3-phospho-(1D-myo-inositol-3-phosphate) + ADP + H(+). Its function is as follows. Generates phosphatidylinositol 3-phosphate (PtdIns3P) and phosphatidylinositol 3,4-bisphosphate (PtdIns(3,4)P2) that act as second messengers. May play a role in SDF1A-stimulated chemotaxis. This is Phosphatidylinositol 3-kinase C2 domain-containing subunit gamma (Pik3c2g) from Mus musculus (Mouse).